A 343-amino-acid polypeptide reads, in one-letter code: CRISPR-associated endonuclease Cas1 1 (343 aa).

Residues Glu-166, His-234, and Glu-249 each contribute to the Mn(2+) site.

Belongs to the CRISPR-associated endonuclease Cas1 family. Homodimer, forms a heterotetramer with a Cas2 homodimer. Mg(2+) serves as cofactor. Requires Mn(2+) as cofactor.

Its function is as follows. CRISPR (clustered regularly interspaced short palindromic repeat), is an adaptive immune system that provides protection against mobile genetic elements (viruses, transposable elements and conjugative plasmids). CRISPR clusters contain spacers, sequences complementary to antecedent mobile elements, and target invading nucleic acids. CRISPR clusters are transcribed and processed into CRISPR RNA (crRNA). Acts as a dsDNA endonuclease. Involved in the integration of spacer DNA into the CRISPR cassette. This Chlorobaculum tepidum (strain ATCC 49652 / DSM 12025 / NBRC 103806 / TLS) (Chlorobium tepidum) protein is CRISPR-associated endonuclease Cas1 1.